A 1390-amino-acid chain; its full sequence is DNA-directed RNA polymerase III subunit RPC1 (1390 aa).

Residues Cys69, Cys72, Cys79, His82, Cys109, and Cys112 each contribute to the Zn(2+) site. Residue Lys144 coordinates DNA. The Zn(2+) site is built by Cys156 and Cys159. DNA-binding residues include Lys167, Ser326, Lys348, Arg353, Arg360, and Arg366. Lys445 is modified (N6-acetyllysine). Residue Arg464 participates in RNA binding. Positions 499, 501, and 503 each coordinate Mg(2+). An RNA-binding site is contributed by Asp503. A bridging helix region spans residues 844 to 856 (PTEFFFHTMAGRE). Positions 1159, 1305, and 1323 each coordinate DNA.

The protein belongs to the RNA polymerase beta' chain family. Component of the RNA polymerase III (Pol III) complex consisting of 17 subunits: a ten-subunit catalytic core composed of POLR3A/RPC1, POLR3B/RPC2, POLR1C/RPAC1, POLR1D/RPAC2, POLR3K/RPC10, POLR2E/RPABC1, POLR2F/RPABC2, POLR2H/RPABC3, POLR2K/RPABC4 and POLR2L/RPABC5; a mobile stalk composed of two subunits POLR3H/RPC8 and CRCP/RPC9, protruding from the core and functioning primarily in transcription initiation; and additional subunits homologous to general transcription factors of the RNA polymerase II machinery, POLR3C/RPC3-POLR3F/RPC6-POLR3G/RPC7 heterotrimer required for transcription initiation and POLR3D/RPC4-POLR3E/RPC5 heterodimer involved in both transcription initiation and termination. As part of the RNA polymerase III complex, interacts with PKP2. The cofactor is Mg(2+).

It is found in the nucleus. The protein resides in the cytoplasm. Its subcellular location is the cytosol. It carries out the reaction RNA(n) + a ribonucleoside 5'-triphosphate = RNA(n+1) + diphosphate. In terms of biological role, catalytic core component of RNA polymerase III (Pol III), a DNA-dependent RNA polymerase which synthesizes small non-coding RNAs using the four ribonucleoside triphosphates as substrates. Synthesizes 5S rRNA, snRNAs, tRNAs and miRNAs from at least 500 distinct genomic loci. Pol III-mediated transcription cycle proceeds through transcription initiation, transcription elongation and transcription termination stages. During transcription initiation, Pol III is recruited to DNA promoters type I, II or III with the help of general transcription factors and other specific initiation factors. Once the polymerase has escaped from the promoter it enters the elongation phase during which RNA is actively polymerized, based on complementarity with the template DNA strand. Transcription termination involves the release of the RNA transcript and polymerase from the DNA. Forms Pol III active center together with the second largest subunit POLR3B/RPC2. Appends one nucleotide at a time to the 3' end of the nascent RNA, with POLR3A/RPC1 contributing a Mg(2+)-coordinating DxDGD motif, and POLR3B/RPC2 participating in the coordination of a second Mg(2+) ion and providing lysine residues believed to facilitate Watson-Crick base pairing between the incoming nucleotide and template base. Typically, Mg(2+) ions direct a 5' nucleoside triphosphate to form a phosphodiester bond with the 3' hydroxyl of the preceding nucleotide of the nascent RNA, with the elimination of pyrophosphate. Pol III plays a key role in sensing and limiting infection by intracellular bacteria and DNA viruses. Acts as a nuclear and cytosolic DNA sensor involved in innate immune response. Can sense non-self dsDNA that serves as template for transcription into dsRNA. The non-self RNA polymerase III transcripts, such as Epstein-Barr virus-encoded RNAs (EBERs) induce type I interferon and NF-kappa-B through the RIG-I pathway. The sequence is that of DNA-directed RNA polymerase III subunit RPC1 from Bos taurus (Bovine).